The sequence spans 52 residues: QICTNCCAGRKGCSYFSEDGTFICKGESNPENPKACPRNCDGRIAYGICPLS.

The residue at position 1 (glutamine 1) is a Pyrrolidone carboxylic acid. Disulfide bonds link cysteine 3–cysteine 40, cysteine 6–cysteine 24, cysteine 7–cysteine 36, and cysteine 13–cysteine 49.

This sequence belongs to the protease inhibitor I20 (potato type II proteinase inhibitor) family.

It is found in the secreted. The protein is Proteinase inhibitor of Solanum melongena (Eggplant).